Reading from the N-terminus, the 270-residue chain is Carboxy-terminal domain RNA polymerase II polypeptide A small phosphatase 2 (270 aa).

S5 is modified (phosphoserine). One can recognise an FCP1 homology domain in the interval 96–254 (QDQGRICVVI…LNLIPVFEEL (159 aa)). Catalysis depends on D106, which acts as the 4-aspartylphosphate intermediate. D106, D108, and N217 together coordinate Mg(2+). Catalysis depends on D108, which acts as the Proton donor.

In terms of assembly, monomer. Interacts with REST. Requires Mg(2+) as cofactor. In terms of tissue distribution, expression is restricted to non-neuronal tissues.

Its subcellular location is the nucleus. The catalysed reaction is O-phospho-L-seryl-[protein] + H2O = L-seryl-[protein] + phosphate. It carries out the reaction O-phospho-L-threonyl-[protein] + H2O = L-threonyl-[protein] + phosphate. Preferentially catalyzes the dephosphorylation of 'Ser-5' within the tandem 7 residue repeats in the C-terminal domain (CTD) of the largest RNA polymerase II subunit POLR2A. Negatively regulates RNA polymerase II transcription, possibly by controlling the transition from initiation/capping to processive transcript elongation. Recruited by REST to neuronal genes that contain RE-1 elements, leading to neuronal gene silencing in non-neuronal cells. The protein is Carboxy-terminal domain RNA polymerase II polypeptide A small phosphatase 2 (Ctdsp2) of Mus musculus (Mouse).